A 677-amino-acid chain; its full sequence is UvrABC system protein B (677 aa).

One can recognise a Helicase ATP-binding domain in the interval 25–412 (DGVNSGREYQ…SGAIIEQVIR (388 aa)). 38-45 (GATGTGKT) contacts ATP. The Beta-hairpin motif lies at 91–114 (YYDYYQPEAYVPVSDTYIAKTSSI). The Helicase C-terminal domain occupies 429-591 (QVEDLLDEIR…IVPMPAGKKA (163 aa)). The 36-residue stretch at 639–674 (PQLIDELETKMKKSAKDLDFENAAKLRDKIHQLRKK) folds into the UVR domain.

This sequence belongs to the UvrB family. As to quaternary structure, forms a heterotetramer with UvrA during the search for lesions. Interacts with UvrC in an incision complex.

It is found in the cytoplasm. Functionally, the UvrABC repair system catalyzes the recognition and processing of DNA lesions. A damage recognition complex composed of 2 UvrA and 2 UvrB subunits scans DNA for abnormalities. Upon binding of the UvrA(2)B(2) complex to a putative damaged site, the DNA wraps around one UvrB monomer. DNA wrap is dependent on ATP binding by UvrB and probably causes local melting of the DNA helix, facilitating insertion of UvrB beta-hairpin between the DNA strands. Then UvrB probes one DNA strand for the presence of a lesion. If a lesion is found the UvrA subunits dissociate and the UvrB-DNA preincision complex is formed. This complex is subsequently bound by UvrC and the second UvrB is released. If no lesion is found, the DNA wraps around the other UvrB subunit that will check the other stand for damage. The chain is UvrABC system protein B from Prochlorococcus marinus (strain SARG / CCMP1375 / SS120).